A 166-amino-acid polypeptide reads, in one-letter code: MGDIRKHRKKYERPYKPWDRRVLEETNRLAGYYGLRNKRELWRMSFLAKKYRRIARQLLAAPKSESWKVEPIIKKLQALGILSKDATLDDLLDLSVEQFLERRLQTIVWRKGFAKSPYMARQLITHGHIRVNGRRIRQPSYLVKIEEEDKIECLHPSCLEVEKEVR.

The S4 RNA-binding domain occupies 102–164 (RRLQTIVWRK…HPSCLEVEKE (63 aa)).

This sequence belongs to the universal ribosomal protein uS4 family. As to quaternary structure, part of the 30S ribosomal subunit. Contacts protein S5. The interaction surface between S4 and S5 is involved in control of translational fidelity.

Its function is as follows. One of the primary rRNA binding proteins, it binds directly to 16S rRNA where it nucleates assembly of the body of the 30S subunit. Functionally, with S5 and S12 plays an important role in translational accuracy. This is Small ribosomal subunit protein uS4 from Korarchaeum cryptofilum (strain OPF8).